The primary structure comprises 344 residues: MALDKSKALDTAVSQIERQFGKGSIMRMGDRASQKVASISTGSLALDLALGVGGVPRGRIVEIFGPESSGKTTLALHIIAEAQRAGGLAAFIDAEHALDPTYAEAIGVDLENLYFSQPDSGEQALEIADTLVRSGALDAVVIDSVAALVPRAEIEGEMGDSHVGLQARLMSQALRKLSGSLSRSGTTAIFINQLREKIGVMFGSPETTPGGRALKFYASVRMDIRRIGALKAGNETVGNQTRVKIVKNKVAPPFKEVTFDIMYGEGISREGSLLDVGIEQGVIQKSGAWFAYGEERIGQGRENARKFLKEHPEIRDRITREVYERLGLGGEEREELEGRAEPVL.

Residue 65 to 72 (GPESSGKT) coordinates ATP.

The protein belongs to the RecA family.

Its subcellular location is the cytoplasm. In terms of biological role, can catalyze the hydrolysis of ATP in the presence of single-stranded DNA, the ATP-dependent uptake of single-stranded DNA by duplex DNA, and the ATP-dependent hybridization of homologous single-stranded DNAs. It interacts with LexA causing its activation and leading to its autocatalytic cleavage. The sequence is that of Protein RecA from Rubrobacter xylanophilus (strain DSM 9941 / JCM 11954 / NBRC 16129 / PRD-1).